The sequence spans 116 residues: Orphan antitoxin YagB (116 aa).

The protein belongs to the CbeA/YafW/YfjZ antitoxin family.

Its function is as follows. Putative antitoxin component of a type IV toxin-antitoxin (TA) system; its cognate toxin is unknown. The protein is Orphan antitoxin YagB (yagB) of Escherichia coli (strain K12).